The following is a 966-amino-acid chain: Envelope glycoprotein (966 aa).

An N-terminal signal peptide occupies residues 1 to 83 (MDAGARYMRL…LLGINMCVSA (83 aa)). Topologically, residues 84–801 (EDYITLISDP…SLKDVFDWSG (718 aa)) are extracellular. N-linked (GlcNAc...) asparagine; by host glycosylation is found at asparagine 101, asparagine 134, asparagine 179, asparagine 220, asparagine 231, asparagine 334, asparagine 351, asparagine 357, asparagine 382, asparagine 403, asparagine 407, asparagine 438, asparagine 443, asparagine 449, asparagine 459, asparagine 469, asparagine 483, asparagine 495, asparagine 505, asparagine 511, asparagine 529, and asparagine 536. Residues 633-653 (GVGLVIMLVIMAIVAAAGASL) are fusion peptide. Coiled-coil stretches lie at residues 665-715 (KAAV…RIML) and 756-791 (RGLQ…EVWE). The tract at residues 699–715 (LEARVARVEAITDRIML) is immunosuppression. Residues 802 to 822 (WFSWLKYIPIIVVGLLGCILI) form a helical membrane-spanning segment. The Cytoplasmic portion of the chain corresponds to 823 to 966 (RAVICVCQPL…LWCYKKSKSL (144 aa)).

As to quaternary structure, the mature envelope protein (Env) consists of a trimer of SU-TM heterodimers attached by noncovalent interactions or by a labile interchain disulfide bond. Specific enzymatic cleavages in vivo yield mature proteins. Envelope glycoproteins are synthesized as an inactive precursor that is N-glycosylated and processed likely by host cell furin or by a furin-like protease in the Golgi to yield the mature SU and TM proteins. The cleavage site between SU and TM requires the minimal sequence [KR]-X-[KR]-R.

It is found in the virion membrane. Its subcellular location is the host cell membrane. The surface protein (SU) attaches the virus to the host cell by binding to its receptor. This interaction triggers the refolding of the transmembrane protein (TM) and is thought to activate its fusogenic potential by unmasking its fusion peptide. Fusion occurs at the host cell plasma membrane. In terms of biological role, the transmembrane protein (TM) acts as a class I viral fusion protein. Under the current model, the protein has at least 3 conformational states: pre-fusion native state, pre-hairpin intermediate state, and post-fusion hairpin state. During viral and target cell membrane fusion, the coiled coil regions (heptad repeats) assume a trimer-of-hairpins structure, positioning the fusion peptide in close proximity to the C-terminal region of the ectodomain. The formation of this structure appears to drive apposition and subsequent fusion of viral and target cell membranes. Membranes fusion leads to delivery of the nucleocapsid into the cytoplasm. In Caprine arthritis encephalitis virus (strain Cork) (CAEV-Co), this protein is Envelope glycoprotein (env).